The chain runs to 173 residues: NADH-ubiquinone oxidoreductase chain 6 (173 aa).

Transmembrane regions (helical) follow at residues 1 to 21 (MTYF…AVAS), 27 to 47 (YGVV…VNLG), 48 to 68 (VSFV…VVFV), 87 to 107 (VMGY…LGGF), and 139 to 159 (YGVG…FVVL).

This sequence belongs to the complex I subunit 6 family.

The protein resides in the mitochondrion membrane. It carries out the reaction a ubiquinone + NADH + 5 H(+)(in) = a ubiquinol + NAD(+) + 4 H(+)(out). Its function is as follows. Core subunit of the mitochondrial membrane respiratory chain NADH dehydrogenase (Complex I) that is believed to belong to the minimal assembly required for catalysis. Complex I functions in the transfer of electrons from NADH to the respiratory chain. The immediate electron acceptor for the enzyme is believed to be ubiquinone. In Coturnix japonica (Japanese quail), this protein is NADH-ubiquinone oxidoreductase chain 6 (MT-ND6).